The sequence spans 247 residues: Mitochondrial inner membrane protease ATP23 (247 aa).

Residue H146 participates in a divalent metal cation binding. E147 is an active-site residue. H150 serves as a coordination point for a divalent metal cation.

This sequence belongs to the peptidase M76 family.

The protein localises to the mitochondrion inner membrane. Its function is as follows. Has a dual role in the assembly of mitochondrial ATPase. Acts as a protease that removes N-terminal residues of mitochondrial ATPase CF(0) subunit 6 at the intermembrane space side. Also involved in the correct assembly of the membrane-embedded ATPase CF(0) particle, probably mediating association of subunit 6 with the subunit 9 ring. This Eremothecium gossypii (strain ATCC 10895 / CBS 109.51 / FGSC 9923 / NRRL Y-1056) (Yeast) protein is Mitochondrial inner membrane protease ATP23 (ATP23).